The following is an 837-amino-acid chain: Probable aldehyde oxidase 4 (837 aa).

Positions 9 to 98 constitute a 2Fe-2S ferredoxin-type domain; the sequence is ERVVFELNGE…FCSIITTEGL (90 aa). [2Fe-2S] cluster-binding residues include Cys50, Cys55, Cys58, and Cys80. The FAD-binding PCMH-type domain maps to 240–427; that stretch reads ISGPREGWYC…LSIFIPHWAS (188 aa).

It belongs to the xanthine dehydrogenase family. In terms of assembly, aldehyde oxidases (AO) are homodimers and heterodimers of AO subunits. [2Fe-2S] cluster serves as cofactor. It depends on FAD as a cofactor. Mo-molybdopterin is required as a cofactor.

The catalysed reaction is an aldehyde + O2 + H2O = a carboxylate + H2O2 + H(+). In Oryza sativa subsp. japonica (Rice), this protein is Probable aldehyde oxidase 4.